We begin with the raw amino-acid sequence, 348 residues long: Protein pof5 (348 aa).

To yeast YDR306C. In terms of assembly, interacts with skp1.

The protein resides in the mitochondrion. This chain is Protein pof5 (pof5), found in Schizosaccharomyces pombe (strain 972 / ATCC 24843) (Fission yeast).